Here is a 663-residue protein sequence, read N- to C-terminus: MSSRPPASLPARGPRLLLLSLLLLGTVPGPRPGSAFYLPGLAPVNFCTEEKKSNECKAEIELFVNRLDSVESVLPYEYTAFDFCQASEGKRPSENLGQVLFGERIEPSPYKFTFNKEETCKLVCTKTYHTEKAEDKQKLDFLKKSMLLNYQHHWIVDNMPVTWCYEVEDNQKFCNPGFPIGCYITDKGHAKDACVISSEFHERDTFYIFNHVDIKIQYHVVETGSMGARLVAAKLEPKSFRHTHIDKPDCSGPAMDISNKASGEIKIAYTYSISFEEEKNIRWASRWDYILESMPHTHIQWFSIMNSLVIVLFLSGMVAMIMLRTLHKDIARYNQMDSTEDAQEEFGWKLVHGDIFRPPRKGMLLSVFLGSGTQILIMTFVTLFFACLGFLSPANRGALMTCAVVLWVLLGTPAGYVAARFYKSFGGEKWKTNVLLTSFLCPGIVFADFFIMNLILWGEGSSAAIPFGTLVAILALWFCISVPLTFIGAYFGFKKNAIEHPVRTNQIPRQIPEQSFYTKPLPGIIMGGILPFGCIFIQLFFILNSIWSHQMYYMFGFLFLVFIILVITCSEATILLCYFHLCAEDYHWQWRSFLTSGFTAVYFLVYAIHYFFSKLQITGTASTILYFGYTMIMVLIFFLFTGTIGFFACFWFVTKIYSVVKVD.

An N-terminal signal peptide occupies residues 1-28 (MSSRPPASLPARGPRLLLLSLLLLGTVP). Over 29 to 300 (GPRPGSAFYL…LESMPHTHIQ (272 aa)) the chain is Lumenal. The chain crosses the membrane as a helical span at residues 301–321 (WFSIMNSLVIVLFLSGMVAMI). Over 322–374 (MLRTLHKDIARYNQMDSTEDAQEEFGWKLVHGDIFRPPRKGMLLSVFLGSGTQ) the chain is Cytoplasmic. The chain crosses the membrane as a helical span at residues 375–395 (ILIMTFVTLFFACLGFLSPAN). Residues 396-398 (RGA) are Lumenal-facing. Residues 399-419 (LMTCAVVLWVLLGTPAGYVAA) traverse the membrane as a helical segment. At 420 to 437 (RFYKSFGGEKWKTNVLLT) the chain is on the cytoplasmic side. The helical transmembrane segment at 438–458 (SFLCPGIVFADFFIMNLILWG) threads the bilayer. The Lumenal portion of the chain corresponds to 459-466 (EGSSAAIP). Residues 467 to 487 (FGTLVAILALWFCISVPLTFI) traverse the membrane as a helical segment. At 488-522 (GAYFGFKKNAIEHPVRTNQIPRQIPEQSFYTKPLP) the chain is on the cytoplasmic side. The chain crosses the membrane as a helical span at residues 523-543 (GIIMGGILPFGCIFIQLFFIL). The Lumenal portion of the chain corresponds to 544 to 554 (NSIWSHQMYYM). A helical membrane pass occupies residues 555 to 575 (FGFLFLVFIILVITCSEATIL). At 576–591 (LCYFHLCAEDYHWQWR) the chain is on the cytoplasmic side. The helical transmembrane segment at 592–612 (SFLTSGFTAVYFLVYAIHYFF) threads the bilayer. Residues 613–631 (SKLQITGTASTILYFGYTM) are Lumenal-facing. The chain crosses the membrane as a helical span at residues 632 to 652 (IMVLIFFLFTGTIGFFACFWF). Topologically, residues 653 to 663 (VTKIYSVVKVD) are cytoplasmic.

The protein belongs to the nonaspanin (TM9SF) (TC 9.A.2) family.

It localises to the endosome membrane. Its subcellular location is the golgi outpost. The protein resides in the cytoplasm. The protein localises to the cytoskeleton. It is found in the microtubule organizing center. In the intracellular compartments, may function as a channel or small molecule transporter. This chain is Transmembrane 9 superfamily member 2 (Tm9sf2), found in Rattus norvegicus (Rat).